The primary structure comprises 295 residues: Acetyl-coenzyme A carboxylase carboxyl transferase subunit beta (295 aa).

The disordered stretch occupies residues 1-20; that stretch reads MSWLSKLMPSGIRTENTPAK. One can recognise a CoA carboxyltransferase N-terminal domain in the interval 28 to 295; it reads LWEKCSNCGS…QPHPQDADAA (268 aa). Residues Cys-32, Cys-35, Cys-51, and Cys-54 each coordinate Zn(2+). Residues 32-54 form a C4-type zinc finger; the sequence is CSNCGSALYGPELEENLEVCPKC.

Belongs to the AccD/PCCB family. As to quaternary structure, acetyl-CoA carboxylase is a heterohexamer composed of biotin carboxyl carrier protein (AccB), biotin carboxylase (AccC) and two subunits each of ACCase subunit alpha (AccA) and ACCase subunit beta (AccD). Requires Zn(2+) as cofactor.

It is found in the cytoplasm. The catalysed reaction is N(6)-carboxybiotinyl-L-lysyl-[protein] + acetyl-CoA = N(6)-biotinyl-L-lysyl-[protein] + malonyl-CoA. The protein operates within lipid metabolism; malonyl-CoA biosynthesis; malonyl-CoA from acetyl-CoA: step 1/1. In terms of biological role, component of the acetyl coenzyme A carboxylase (ACC) complex. Biotin carboxylase (BC) catalyzes the carboxylation of biotin on its carrier protein (BCCP) and then the CO(2) group is transferred by the transcarboxylase to acetyl-CoA to form malonyl-CoA. This is Acetyl-coenzyme A carboxylase carboxyl transferase subunit beta from Xanthomonas oryzae pv. oryzae (strain MAFF 311018).